The following is a 439-amino-acid chain: GTPase Obg (439 aa).

An Obg domain is found at 4–162 (IEFIDVVDIY…KHIQLELKLL (159 aa)). The OBG-type G domain maps to 163 to 336 (ADVGLIGYPN…LKYAMWDIIK (174 aa)). GTP-binding positions include 169-176 (GYPNVGKS), 194-198 (FTTLV), 218-221 (DIPG), 288-291 (NKSD), and 317-319 (SAV). The Mg(2+) site is built by Ser176 and Thr196. The 79-residue stretch at 361–439 (LVLPDRVDIK…VEGVDFIFKE (79 aa)) folds into the OCT domain.

It belongs to the TRAFAC class OBG-HflX-like GTPase superfamily. OBG GTPase family. In terms of assembly, monomer. Mg(2+) serves as cofactor.

The protein resides in the cytoplasm. In terms of biological role, an essential GTPase which binds GTP, GDP and possibly (p)ppGpp with moderate affinity, with high nucleotide exchange rates and a fairly low GTP hydrolysis rate. Plays a role in control of the cell cycle, stress response, ribosome biogenesis and in those bacteria that undergo differentiation, in morphogenesis control. The sequence is that of GTPase Obg from Fervidobacterium nodosum (strain ATCC 35602 / DSM 5306 / Rt17-B1).